The sequence spans 603 residues: MRNIYLALNQHICGALEAAFPQASLVAKQSGQSLNPQLVPATKPEFGDFQVNGALALSKILKKAPRKIAEEIIKQLVKNDDFNKLCLKPEIAGPGFINLTIQNSCLTTEICARLNDDHLGVPIAKPLKTHKSLKPIVVDFSSPNIAKEMHVGHLRSTIIGDSIARVLEFRGHPVLRLNHVGDWGTQFGMLITYLKLVAPEALTTANAINLGDLVKFYRQAKKLFDEDETFQDASREEVVRLQNGDPQSLKAWQLLCDQSRIEFEKIYKRLDIHITERGESFYNQYLQDVIDDLKSTNLLVTDNGAKCIFLDDITGKDGKPLPLIVQKTDGGFNYATTDLAAIRYRLQAYPQGDGACRLIYVTDAGQASHFFAVFQVARRANWIPNDCRIEHVPFGLVQGEDGKKLKTRSGDTVRLKDLLDEAIIRAKNDLEERLNAEGRKEDQEFINKVSRVIGIAAVKYADLSQNRITNYQFSFNRMLALQGNTAPYLLYALVRIAGINRKGGSLNATINKLTFNEPQEWMLARELLKFDEVILQVEEELLPNRLCNYLFELSQVFNRFYDQVPVLKANDSLKASRLALCQLTADTIKLGLKLLGIPTLDRM.

The short motif at 143–153 (PNIAKEMHVGH) is the 'HIGH' region element.

This sequence belongs to the class-I aminoacyl-tRNA synthetase family. Monomer.

Its subcellular location is the cytoplasm. The catalysed reaction is tRNA(Arg) + L-arginine + ATP = L-arginyl-tRNA(Arg) + AMP + diphosphate. This Prochlorococcus marinus (strain MIT 9211) protein is Arginine--tRNA ligase.